Consider the following 122-residue polypeptide: Large ribosomal subunit protein uL14c (122 aa).

It belongs to the universal ribosomal protein uL14 family. As to quaternary structure, part of the 50S ribosomal subunit.

The protein resides in the plastid. Its function is as follows. Binds to 23S rRNA. This chain is Large ribosomal subunit protein uL14c (rpl14), found in Helicosporidium sp. subsp. Simulium jonesii (Green alga).